Reading from the N-terminus, the 122-residue chain is Large ribosomal subunit protein uL14 (122 aa).

Belongs to the universal ribosomal protein uL14 family. As to quaternary structure, part of the 50S ribosomal subunit. Forms a cluster with proteins L3 and L19. In the 70S ribosome, L14 and L19 interact and together make contacts with the 16S rRNA in bridges B5 and B8.

Functionally, binds to 23S rRNA. Forms part of two intersubunit bridges in the 70S ribosome. In Desulfosudis oleivorans (strain DSM 6200 / JCM 39069 / Hxd3) (Desulfococcus oleovorans), this protein is Large ribosomal subunit protein uL14.